Reading from the N-terminus, the 1097-residue chain is DNA-directed RNA polymerase subunit beta (1097 aa).

Residues 1073–1097 (DINPRRNTPSRPTYESLGTSEYEED) are disordered. Residues 1077–1091 (RRNTPSRPTYESLGT) are compositionally biased toward polar residues.

Belongs to the RNA polymerase beta chain family. In terms of assembly, in cyanobacteria the RNAP catalytic core is composed of 2 alpha, 1 beta, 1 beta', 1 gamma and 1 omega subunit. When a sigma factor is associated with the core the holoenzyme is formed, which can initiate transcription.

The enzyme catalyses RNA(n) + a ribonucleoside 5'-triphosphate = RNA(n+1) + diphosphate. Functionally, DNA-dependent RNA polymerase catalyzes the transcription of DNA into RNA using the four ribonucleoside triphosphates as substrates. The chain is DNA-directed RNA polymerase subunit beta from Prochlorococcus marinus (strain MIT 9312).